The sequence spans 125 residues: MTNLLKKFNEQQMQVLAKEIPEFRPGDDLKVTFKVVDGTSERIQIFEGVCISKRNRGLHSSFAVRKVSHGESIVSQFFVYSPALVSVQVTRKGKVRRAKLYYLCKLFGKAARIKERTTYVKKKSK.

This sequence belongs to the bacterial ribosomal protein bL19 family.

Its function is as follows. This protein is located at the 30S-50S ribosomal subunit interface and may play a role in the structure and function of the aminoacyl-tRNA binding site. This Wolbachia pipientis wMel protein is Large ribosomal subunit protein bL19.